A 220-amino-acid polypeptide reads, in one-letter code: Ribose-5-phosphate isomerase A (220 aa).

Substrate contacts are provided by residues 28 to 31, 81 to 84, and 94 to 97; these read TGST, DGAD, and KGGG. The Proton acceptor role is filled by Glu103. Lys121 is a binding site for substrate.

Belongs to the ribose 5-phosphate isomerase family. As to quaternary structure, homodimer.

It catalyses the reaction aldehydo-D-ribose 5-phosphate = D-ribulose 5-phosphate. Its pathway is carbohydrate degradation; pentose phosphate pathway; D-ribose 5-phosphate from D-ribulose 5-phosphate (non-oxidative stage): step 1/1. Functionally, catalyzes the reversible conversion of ribose-5-phosphate to ribulose 5-phosphate. This Shewanella baltica (strain OS185) protein is Ribose-5-phosphate isomerase A.